Reading from the N-terminus, the 196-residue chain is Endonuclease V (196 aa).

2 residues coordinate Mg(2+): D37 and D98.

The protein belongs to the endonuclease V family. The cofactor is Mg(2+).

It localises to the cytoplasm. The enzyme catalyses Endonucleolytic cleavage at apurinic or apyrimidinic sites to products with a 5'-phosphate.. DNA repair enzyme involved in the repair of deaminated bases. Selectively cleaves double-stranded DNA at the second phosphodiester bond 3' to a deoxyinosine leaving behind the intact lesion on the nicked DNA. The polypeptide is Endonuclease V (Sulfurisphaera tokodaii (strain DSM 16993 / JCM 10545 / NBRC 100140 / 7) (Sulfolobus tokodaii)).